The sequence spans 162 residues: Chemoreceptor glutamine deamidase CheD (162 aa).

The protein belongs to the CheD family. In terms of assembly, forms a complex with CheC.

It carries out the reaction L-glutaminyl-[protein] + H2O = L-glutamyl-[protein] + NH4(+). Its function is as follows. Deamidates glutamine residues to glutamate on methyl-accepting chemotaxis receptors (MCPs). CheD-mediated MCP deamidation is required for productive communication of the conformational signals of the chemoreceptors to the CheA kinase. The polypeptide is Chemoreceptor glutamine deamidase CheD (Halalkalibacterium halodurans (strain ATCC BAA-125 / DSM 18197 / FERM 7344 / JCM 9153 / C-125) (Bacillus halodurans)).